A 39-amino-acid chain; its full sequence is Photosystem II reaction center protein L (39 aa).

Residues 18–38 form a helical membrane-spanning segment; the sequence is SLYLGLLSVLVLGILFSSYFF.

The protein belongs to the PsbL family. PSII is composed of 1 copy each of membrane proteins PsbA, PsbB, PsbC, PsbD, PsbE, PsbF, PsbH, PsbI, PsbJ, PsbK, PsbL, PsbM, PsbT, PsbX, PsbY, Psb30/Ycf12, peripheral proteins PsbO, CyanoQ (PsbQ), PsbU, PsbV and a large number of cofactors. It forms dimeric complexes.

It is found in the cellular thylakoid membrane. Its function is as follows. One of the components of the core complex of photosystem II (PSII). PSII is a light-driven water:plastoquinone oxidoreductase that uses light energy to abstract electrons from H(2)O, generating O(2) and a proton gradient subsequently used for ATP formation. It consists of a core antenna complex that captures photons, and an electron transfer chain that converts photonic excitation into a charge separation. This subunit is found at the monomer-monomer interface and is required for correct PSII assembly and/or dimerization. The chain is Photosystem II reaction center protein L from Prochlorococcus marinus subsp. pastoris (strain CCMP1986 / NIES-2087 / MED4).